Reading from the N-terminus, the 251-residue chain is Ubiquinone/menaquinone biosynthesis C-methyltransferase UbiE (251 aa).

S-adenosyl-L-methionine-binding positions include Thr74, Asp95, 123–124 (NA), and Ser140.

The protein belongs to the class I-like SAM-binding methyltransferase superfamily. MenG/UbiE family.

The enzyme catalyses a 2-demethylmenaquinol + S-adenosyl-L-methionine = a menaquinol + S-adenosyl-L-homocysteine + H(+). The catalysed reaction is a 2-methoxy-6-(all-trans-polyprenyl)benzene-1,4-diol + S-adenosyl-L-methionine = a 5-methoxy-2-methyl-3-(all-trans-polyprenyl)benzene-1,4-diol + S-adenosyl-L-homocysteine + H(+). Its pathway is quinol/quinone metabolism; menaquinone biosynthesis; menaquinol from 1,4-dihydroxy-2-naphthoate: step 2/2. It participates in cofactor biosynthesis; ubiquinone biosynthesis. Functionally, methyltransferase required for the conversion of demethylmenaquinol (DMKH2) to menaquinol (MKH2) and the conversion of 2-polyprenyl-6-methoxy-1,4-benzoquinol (DDMQH2) to 2-polyprenyl-3-methyl-6-methoxy-1,4-benzoquinol (DMQH2). This Klebsiella pneumoniae (strain 342) protein is Ubiquinone/menaquinone biosynthesis C-methyltransferase UbiE.